A 159-amino-acid chain; its full sequence is Ecotin (159 aa).

Positions 1–22 (MRPTPMTAILALTLAAAAPAMA) are cleaved as a signal peptide. A disulfide bridge connects residues Cys-68 and Cys-105.

The protein belongs to the protease inhibitor I11 (ecotin) family. In terms of assembly, homodimer.

It is found in the periplasm. Its function is as follows. General inhibitor of family S1 serine proteases. This is Ecotin from Pseudomonas putida (strain GB-1).